Reading from the N-terminus, the 504-residue chain is Bifunctional purine biosynthesis protein PurH (504 aa).

Positions 1–144 (MRKRALISVY…KSFKNVVVIS (144 aa)) constitute an MGS-like domain.

Belongs to the PurH family.

It carries out the reaction (6R)-10-formyltetrahydrofolate + 5-amino-1-(5-phospho-beta-D-ribosyl)imidazole-4-carboxamide = 5-formamido-1-(5-phospho-D-ribosyl)imidazole-4-carboxamide + (6S)-5,6,7,8-tetrahydrofolate. It catalyses the reaction IMP + H2O = 5-formamido-1-(5-phospho-D-ribosyl)imidazole-4-carboxamide. The protein operates within purine metabolism; IMP biosynthesis via de novo pathway; 5-formamido-1-(5-phospho-D-ribosyl)imidazole-4-carboxamide from 5-amino-1-(5-phospho-D-ribosyl)imidazole-4-carboxamide (10-formyl THF route): step 1/1. It participates in purine metabolism; IMP biosynthesis via de novo pathway; IMP from 5-formamido-1-(5-phospho-D-ribosyl)imidazole-4-carboxamide: step 1/1. In Fusobacterium nucleatum subsp. nucleatum (strain ATCC 25586 / DSM 15643 / BCRC 10681 / CIP 101130 / JCM 8532 / KCTC 2640 / LMG 13131 / VPI 4355), this protein is Bifunctional purine biosynthesis protein PurH.